The sequence spans 551 residues: Methyl-accepting chemotaxis protein I (551 aa).

Over Met1–Lys6 the chain is Cytoplasmic. A helical transmembrane segment spans residues Ile7 to Phe30. At Asn31–Ser190 the chain is on the periplasmic side. The the 3 Arg may form a positively charged pocket, which binds the alpha-carboxyl group of the attractant AA stretch occupies residues Arg64–Arg73. The helical transmembrane segment at Gln191–Val210 threads the bilayer. The Cytoplasmic segment spans residues Trp211–Phe551. Residues Ala216–Gly268 form the HAMP domain. The Methyl-accepting transducer domain occupies Gly273–Glu502. Gln297 is subject to Glutamate methyl ester (Gln). The residue at position 304 (Glu304) is a Glutamate methyl ester (Glu). Gln311 carries the post-translational modification Glutamate methyl ester (Gln). A glutamate methyl ester (Glu) mark is found at Glu493 and Glu502.

It belongs to the methyl-accepting chemotaxis (MCP) protein family.

The protein resides in the cell inner membrane. Its function is as follows. Receptor for the attractant L-serine and related amino acids. Is also responsible for chemotaxis away from a wide range of repellents, including leucine, indole, and weak acids. Functionally, chemotactic-signal transducers respond to changes in the concentration of attractants and repellents in the environment, transduce a signal from the outside to the inside of the cell, and facilitate sensory adaptation through the variation of the level of methylation. Attractants increase the level of methylation while repellents decrease the level of methylation, the methyl groups are added by the methyltransferase CheR and removed by the methylesterase CheB. The sequence is that of Methyl-accepting chemotaxis protein I (tsr) from Escherichia coli (strain K12).